The primary structure comprises 295 residues: N-acetylmuramic acid 6-phosphate etherase (295 aa).

The SIS domain maps to 54 to 217 (VIASFRQGGR…STASMIGIGK (164 aa)). Residue glutamate 82 is the Proton donor of the active site. Glutamate 113 is a catalytic residue.

It belongs to the GCKR-like family. MurNAc-6-P etherase subfamily. Homodimer.

The catalysed reaction is N-acetyl-D-muramate 6-phosphate + H2O = N-acetyl-D-glucosamine 6-phosphate + (R)-lactate. Its pathway is amino-sugar metabolism; N-acetylmuramate degradation. Functionally, specifically catalyzes the cleavage of the D-lactyl ether substituent of MurNAc 6-phosphate, producing GlcNAc 6-phosphate and D-lactate. The chain is N-acetylmuramic acid 6-phosphate etherase from Geobacillus sp. (strain WCH70).